The chain runs to 78 residues: RNA-binding protein Hfq (78 aa).

The 61-residue stretch at 9–69 folds into the Sm domain; sequence DHFLNQLRKE…ISTFAPQRNV (61 aa).

Belongs to the Hfq family. As to quaternary structure, homohexamer.

Its function is as follows. RNA chaperone that binds small regulatory RNA (sRNAs) and mRNAs to facilitate mRNA translational regulation in response to envelope stress, environmental stress and changes in metabolite concentrations. Also binds with high specificity to tRNAs. This Halalkalibacterium halodurans (strain ATCC BAA-125 / DSM 18197 / FERM 7344 / JCM 9153 / C-125) (Bacillus halodurans) protein is RNA-binding protein Hfq.